We begin with the raw amino-acid sequence, 363 residues long: Aminomethyltransferase (363 aa).

This sequence belongs to the GcvT family. The glycine cleavage system is composed of four proteins: P, T, L and H.

It catalyses the reaction N(6)-[(R)-S(8)-aminomethyldihydrolipoyl]-L-lysyl-[protein] + (6S)-5,6,7,8-tetrahydrofolate = N(6)-[(R)-dihydrolipoyl]-L-lysyl-[protein] + (6R)-5,10-methylene-5,6,7,8-tetrahydrofolate + NH4(+). In terms of biological role, the glycine cleavage system catalyzes the degradation of glycine. The chain is Aminomethyltransferase from Staphylococcus saprophyticus subsp. saprophyticus (strain ATCC 15305 / DSM 20229 / NCIMB 8711 / NCTC 7292 / S-41).